Here is a 421-residue protein sequence, read N- to C-terminus: O-acetyl-L-homoserine sulfhydrylase 1 (421 aa).

N6-(pyridoxal phosphate)lysine is present on lysine 206.

The protein belongs to the trans-sulfuration enzymes family. As to quaternary structure, homotetramer. Pyridoxal 5'-phosphate serves as cofactor.

It catalyses the reaction O-acetyl-L-homoserine + hydrogen sulfide = L-homocysteine + acetate. Its pathway is amino-acid biosynthesis; L-methionine biosynthesis via de novo pathway; L-homocysteine from O-acetyl-L-homoserine: step 1/1. Inhibited by the carbonyl reagents hydroxylamine and phenylhydrazine. Also inhibited by methionine and propargylglycine. Catalyzes the conversion of O-acetyl-L-homoserine (OAH) into homocysteine in the methionine biosynthesis pathway. Has weak activity with O-acetyl-L-serine, O-phospho-L-serine, L-serine, O-succinyl-L-homoserine and L-homoserine. Shows low CTT beta-lyase activity and very low CTT gamma-synthase activity. The protein is O-acetyl-L-homoserine sulfhydrylase 1 of Thermus thermophilus (strain ATCC 27634 / DSM 579 / HB8).